A 188-amino-acid polypeptide reads, in one-letter code: Ribosome maturation factor RimP (188 aa).

The protein belongs to the RimP family.

The protein resides in the cytoplasm. Required for maturation of 30S ribosomal subunits. The polypeptide is Ribosome maturation factor RimP (Erythrobacter litoralis (strain HTCC2594)).